A 1182-amino-acid chain; its full sequence is Phosphatidylinositol 3-kinase age-1 (1182 aa).

The segment covering methionine 1–glycine 16 has biased composition (polar residues). The segment at methionine 1–isoleucine 24 is disordered. In terms of domain architecture, PI3K-ABD spans asparagine 74–aspartate 174. The PI3K-RBD domain occupies lysine 266 to arginine 358. Residues leucine 425–proline 577 enclose the C2 PI3K-type domain. One can recognise a PIK helical domain in the interval aspartate 601 to glycine 788. Positions isoleucine 853–tryptophan 1168 constitute a PI3K/PI4K catalytic domain. Residues valine 859 to arginine 865 are G-loop. The interval glycine 1028–asparagine 1036 is catalytic loop. An activation loop region spans residues histidine 1047–threonine 1073.

This sequence belongs to the PI3/PI4-kinase family.

It carries out the reaction a 1,2-diacyl-sn-glycero-3-phospho-(1D-myo-inositol) + ATP = a 1,2-diacyl-sn-glycero-3-phospho-(1D-myo-inositol-3-phosphate) + ADP + H(+). Functionally, phosphatidylinositol 3-kinase homolog that regulates longevity and diapause. Promotes cell survival during embryonic development by recruiting akt-1/2 to the plasma membrane through the production of PtdIns(3,4,5)P3. Could function in the development or neuroendocrine signaling of the dauer pathway. Mediates susceptibility to enteropathogenic E.coli infection. May negatively regulate AYI interneuron neurite outgrowth. Plays a role in aversive olfactory learning when an odor is associated with food deprivation. Regulates this process by promoting the nuclear relocalization of egl-4 in AWC olfactory neurons after odor conditioning. This is Phosphatidylinositol 3-kinase age-1 from Caenorhabditis elegans.